The primary structure comprises 432 residues: ATP-dependent RNA helicase RhlB (432 aa).

The Q motif signature appears at 9 to 37 (QNFADLGLQPQVIDGLNAKGFIKCTPIQA). Residues 40–219 (LPVLLAGQDI…FEHMQEPEHV (180 aa)) enclose the Helicase ATP-binding domain. 53–60 (AQTGTGKT) provides a ligand contact to ATP. The DEAD box motif lies at 165–168 (DEAD). The 146-residue stretch at 245–390 (ALLQTLIEEE…QSDYDASALL (146 aa)) folds into the Helicase C-terminal domain. A disordered region spans residues 396 to 432 (PLRLQRRPQQNRRNNNGQRQGGNRKHTRPRQPRNTQS). Positions 417 to 426 (GNRKHTRPRQ) are enriched in basic residues.

This sequence belongs to the DEAD box helicase family. RhlB subfamily. Component of the RNA degradosome, which is a multiprotein complex involved in RNA processing and mRNA degradation.

Its subcellular location is the cytoplasm. It catalyses the reaction ATP + H2O = ADP + phosphate + H(+). DEAD-box RNA helicase involved in RNA degradation. Has RNA-dependent ATPase activity and unwinds double-stranded RNA. The polypeptide is ATP-dependent RNA helicase RhlB (Aliivibrio fischeri (strain ATCC 700601 / ES114) (Vibrio fischeri)).